We begin with the raw amino-acid sequence, 106 residues long: Transcriptional and immune response regulator (106 aa).

As to quaternary structure, monomer. Interacts with NOTCH2 (via ANK repeats), the interaction inhibits the nuclear translocation of NOTCH2 N2ICD. Interacts (C-terminus) with CBY1 (C-terminus), TCIM competes with CTNNB1 for the interaction with CBY1. Ubiquitous. Expressed in thyroid papillary carcinoma. Expressed in liver, expression levels decrease in hepatocellular carcinoma. Slightly detected in normal lung, its expression is highly induced in lung cancer cells (at protein level).

It is found in the cytoplasm. The protein localises to the nucleus. The protein resides in the nucleolus. It localises to the nucleus speckle. Seems to be involved in the regulation of cell growth an differentiation, may play different and opposite roles depending on the tissue or cell type. May enhance the WNT-CTNNB1 pathway by relieving antagonistic activity of CBY1. Enhances the proliferation of follicular dendritic cells. Plays a role in the mitogen-activated MAPK2/3 signaling pathway, positively regulates G1-to-S-phase transition of the cell cycle. In endothelial cells, enhances key inflammatory mediators and inflammatory response through the modulation of NF-kappaB transcriptional regulatory activity. Involved in the regulation of heat shock response, seems to play a positive feedback with HSF1 to modulate heat-shock downstream gene expression. Plays a role in the regulation of hematopoiesis even if the mechanisms are unknown. In cancers such as thyroid or lung cancer, it has been described as promoter of cell proliferation, G1-to-S-phase transition and inhibitor of apoptosis. However, it negatively regulates self-renewal of liver cancer cells via suppresion of NOTCH2 signaling. The chain is Transcriptional and immune response regulator from Homo sapiens (Human).